The sequence spans 406 residues: Methylthioribose-1-phosphate isomerase (406 aa).

Asp277 serves as the catalytic Proton donor.

Belongs to the eIF-2B alpha/beta/delta subunits family. MtnA subfamily.

It is found in the cytoplasm. The protein localises to the nucleus. It catalyses the reaction 5-(methylsulfanyl)-alpha-D-ribose 1-phosphate = 5-(methylsulfanyl)-D-ribulose 1-phosphate. It functions in the pathway amino-acid biosynthesis; L-methionine biosynthesis via salvage pathway; L-methionine from S-methyl-5-thio-alpha-D-ribose 1-phosphate: step 1/6. Functionally, catalyzes the interconversion of methylthioribose-1-phosphate (MTR-1-P) into methylthioribulose-1-phosphate (MTRu-1-P). The sequence is that of Methylthioribose-1-phosphate isomerase from Debaryomyces hansenii (strain ATCC 36239 / CBS 767 / BCRC 21394 / JCM 1990 / NBRC 0083 / IGC 2968) (Yeast).